Consider the following 504-residue polypeptide: MPADSTQDEDAVLSYGMKLTWDINDPQMPQEPTHFDHFREWPDGYVRFIYSSQEKKAQRHLSGWAMRNTNNHNGHILKKSCLGVVVCARACALKDGSHLQLRPAICDKARLKQQKKACPNCHSPLELVPCRGHSGYPVTNFWRLDGNAIFFQAKGVHDHPRPESKSETEGRRSALKRQMASFYQPQKRRSEEPEARSTQDIRGHLNSTAALEPTELFDMTADTSFPIPGQPSPSFPNSDVHRVTCDLPTFQGDIILPFQKYPNPSIYFPGPPWGYELASSGVTGSSPYSTLYKDSSVVPDDPDWIPLNSLQYNVSSYGSYERTLDFTARYHSWKPTHGKPSLEEKVDCEQCQAVPTSPYYNLELPCRYLPVPAAGTQALQTVITTTVAYQAYQHPALKHSDSMQEVSSLASCTYASENLPMPIYPPALDPQEGVIQAASPSGRAPLKVPGDCQAPRPTLDFPQEADPSGTDGADVWDVCLSGVGSVMGYLDRTGQPFSFDNEDF.

Positions 19–174 (LTWDINDPQM…KSETEGRRSA (156 aa)) form a DNA-binding region, GCM. Zn(2+)-binding residues include Cys81, Cys87, Cys91, Cys118, Cys121, Cys130, His157, and His159. Composition is skewed to basic and acidic residues over residues 155–172 (GVHDHPRPESKSETEGRR) and 188–203 (RRSEEPEARSTQDIRG). The tract at residues 155-203 (GVHDHPRPESKSETEGRRSALKRQMASFYQPQKRRSEEPEARSTQDIRG) is disordered. Positions 379-393 (LQTVITTTVAYQAYQ) are C-terminal conserved inhibitory domain (CCID). Residues 438 to 472 (ASPSGRAPLKVPGDCQAPRPTLDFPQEADPSGTDG) are disordered.

The protein localises to the nucleus. Functionally, transcription factor that binds specific sequences on gene promoters and activate their transcription. Through the regulation of gene transcription, may play a role in parathyroid gland development. In Mus musculus (Mouse), this protein is Chorion-specific transcription factor GCMb.